The following is a 371-amino-acid chain: Peptide chain release factor 2 (371 aa).

Residue Gln-247 is modified to N5-methylglutamine.

The protein belongs to the prokaryotic/mitochondrial release factor family. In terms of processing, methylated by PrmC. Methylation increases the termination efficiency of RF2.

It localises to the cytoplasm. Functionally, peptide chain release factor 2 directs the termination of translation in response to the peptide chain termination codons UGA and UAA. The chain is Peptide chain release factor 2 from Caulobacter vibrioides (strain ATCC 19089 / CIP 103742 / CB 15) (Caulobacter crescentus).